The following is a 353-amino-acid chain: Histidinol-phosphate aminotransferase (353 aa).

Lys209 is modified (N6-(pyridoxal phosphate)lysine).

It belongs to the class-II pyridoxal-phosphate-dependent aminotransferase family. Histidinol-phosphate aminotransferase subfamily. In terms of assembly, homodimer. Requires pyridoxal 5'-phosphate as cofactor.

It catalyses the reaction L-histidinol phosphate + 2-oxoglutarate = 3-(imidazol-4-yl)-2-oxopropyl phosphate + L-glutamate. The protein operates within amino-acid biosynthesis; L-histidine biosynthesis; L-histidine from 5-phospho-alpha-D-ribose 1-diphosphate: step 7/9. The protein is Histidinol-phosphate aminotransferase of Buchnera aphidicola subsp. Cinara cedri (strain Cc).